The chain runs to 254 residues: Pimeloyl-[acyl-carrier protein] methyl ester esterase (254 aa).

In terms of domain architecture, AB hydrolase-1 spans 14–238; that stretch reads VVMLHGWGLH…QASHAPFLSH (225 aa). Residues tryptophan 20, 80-81, and 142-146 each bind substrate; these read SL and FLALQ. Serine 80 functions as the Nucleophile in the catalytic mechanism. Residues aspartate 204 and histidine 232 contribute to the active site. Position 232 (histidine 232) interacts with substrate.

Belongs to the AB hydrolase superfamily. Carboxylesterase BioH family. As to quaternary structure, monomer.

The protein resides in the cytoplasm. The enzyme catalyses 6-carboxyhexanoyl-[ACP] methyl ester + H2O = 6-carboxyhexanoyl-[ACP] + methanol + H(+). Its pathway is cofactor biosynthesis; biotin biosynthesis. Its function is as follows. The physiological role of BioH is to remove the methyl group introduced by BioC when the pimeloyl moiety is complete. It allows to synthesize pimeloyl-ACP via the fatty acid synthetic pathway through the hydrolysis of the ester bonds of pimeloyl-ACP esters. The sequence is that of Pimeloyl-[acyl-carrier protein] methyl ester esterase from Chromobacterium violaceum (strain ATCC 12472 / DSM 30191 / JCM 1249 / CCUG 213 / NBRC 12614 / NCIMB 9131 / NCTC 9757 / MK).